The sequence spans 104 residues: uncharacterized protein (104 aa).

Transmembrane regions (helical) follow at residues 16-36 (LAFFYIIDGAIIALMLVLASY) and 44-64 (GGFGRIMFYVLFGTFGLFLCI).

Its subcellular location is the cell membrane. This is an uncharacterized protein from Bacillus anthracis.